Here is a 250-residue protein sequence, read N- to C-terminus: ATP synthase subunit a (250 aa).

The next 6 helical transmembrane spans lie at F26–F46, F84–F104, I114–Y134, V143–I163, F193–I213, and V216–L236.

The protein belongs to the ATPase A chain family. F-type ATPases have 2 components, CF(1) - the catalytic core - and CF(0) - the membrane proton channel. CF(1) has five subunits: alpha(3), beta(3), gamma(1), delta(1), epsilon(1). CF(0) has three main subunits: a(1), b(2) and c(9-12). The alpha and beta chains form an alternating ring which encloses part of the gamma chain. CF(1) is attached to CF(0) by a central stalk formed by the gamma and epsilon chains, while a peripheral stalk is formed by the delta and b chains.

It localises to the cell inner membrane. Functionally, key component of the proton channel; it plays a direct role in the translocation of protons across the membrane. The polypeptide is ATP synthase subunit a (Rhizobium etli (strain ATCC 51251 / DSM 11541 / JCM 21823 / NBRC 15573 / CFN 42)).